Here is a 317-residue protein sequence, read N- to C-terminus: L-lactate dehydrogenase (317 aa).

NAD(+) contacts are provided by residues V18, D39, K44, Y69, and 83 to 84 (GA). Substrate-binding positions include Q86, R92, and 124–127 (NPVD). NAD(+)-binding positions include 122-124 (VTN) and S147. 152-155 (DTAR) contributes to the substrate binding site. Beta-D-fructose 1,6-bisphosphate contacts are provided by R157 and H172. The active-site Proton acceptor is the H179. A Phosphotyrosine modification is found at Y225. Position 234 (T234) interacts with substrate.

The protein belongs to the LDH/MDH superfamily. LDH family. In terms of assembly, homotetramer.

The protein resides in the cytoplasm. It catalyses the reaction (S)-lactate + NAD(+) = pyruvate + NADH + H(+). Its pathway is fermentation; pyruvate fermentation to lactate; (S)-lactate from pyruvate: step 1/1. Its activity is regulated as follows. Allosterically activated by fructose 1,6-bisphosphate (FBP). In terms of biological role, catalyzes the conversion of lactate to pyruvate. In Acetivibrio thermocellus (strain ATCC 27405 / DSM 1237 / JCM 9322 / NBRC 103400 / NCIMB 10682 / NRRL B-4536 / VPI 7372) (Clostridium thermocellum), this protein is L-lactate dehydrogenase.